A 319-amino-acid polypeptide reads, in one-letter code: Beta-ketoacyl-[acyl-carrier-protein] synthase III (319 aa).

Catalysis depends on residues Cys112 and His246. The ACP-binding stretch occupies residues 247 to 251 (QANKR). Residue Asn276 is part of the active site.

The protein belongs to the thiolase-like superfamily. FabH family. In terms of assembly, homodimer.

The protein resides in the cytoplasm. It catalyses the reaction malonyl-[ACP] + acetyl-CoA + H(+) = 3-oxobutanoyl-[ACP] + CO2 + CoA. It functions in the pathway lipid metabolism; fatty acid biosynthesis. Its function is as follows. Catalyzes the condensation reaction of fatty acid synthesis by the addition to an acyl acceptor of two carbons from malonyl-ACP. Catalyzes the first condensation reaction which initiates fatty acid synthesis and may therefore play a role in governing the total rate of fatty acid production. Possesses both acetoacetyl-ACP synthase and acetyl transacylase activities. Its substrate specificity determines the biosynthesis of branched-chain and/or straight-chain of fatty acids. The protein is Beta-ketoacyl-[acyl-carrier-protein] synthase III of Psychromonas ingrahamii (strain DSM 17664 / CCUG 51855 / 37).